A 133-amino-acid chain; its full sequence is ATP synthase epsilon chain (133 aa).

This sequence belongs to the ATPase epsilon chain family. F-type ATPases have 2 components, CF(1) - the catalytic core - and CF(0) - the membrane proton channel. CF(1) has five subunits: alpha(3), beta(3), gamma(1), delta(1), epsilon(1). CF(0) has three main subunits: a, b and c.

Its subcellular location is the cell membrane. Functionally, produces ATP from ADP in the presence of a proton gradient across the membrane. The protein is ATP synthase epsilon chain (atpC) of Alkalihalophilus pseudofirmus (strain ATCC BAA-2126 / JCM 17055 / OF4) (Bacillus pseudofirmus).